Reading from the N-terminus, the 186-residue chain is Holliday junction branch migration complex subunit RuvA (186 aa).

Positions 1-63 (MNDYINGFLY…DNHFKYYGFF (63 aa)) are domain I. Residues 64 to 137 (NQLVRDLFEI…QKELFNNKIS (74 aa)) form a domain II region. Residue Ser-137 is a region of interest, flexible linker. Residues 137 to 186 (SEKKNKVITSLEKLGYKTKDIYKIIINVDEDLTIDELTKYVLEKLSYINN) form a domain III region.

Belongs to the RuvA family. Homotetramer. Forms an RuvA(8)-RuvB(12)-Holliday junction (HJ) complex. HJ DNA is sandwiched between 2 RuvA tetramers; dsDNA enters through RuvA and exits via RuvB. An RuvB hexamer assembles on each DNA strand where it exits the tetramer. Each RuvB hexamer is contacted by two RuvA subunits (via domain III) on 2 adjacent RuvB subunits; this complex drives branch migration. In the full resolvosome a probable DNA-RuvA(4)-RuvB(12)-RuvC(2) complex forms which resolves the HJ.

Its subcellular location is the cytoplasm. In terms of biological role, the RuvA-RuvB-RuvC complex processes Holliday junction (HJ) DNA during genetic recombination and DNA repair, while the RuvA-RuvB complex plays an important role in the rescue of blocked DNA replication forks via replication fork reversal (RFR). RuvA specifically binds to HJ cruciform DNA, conferring on it an open structure. The RuvB hexamer acts as an ATP-dependent pump, pulling dsDNA into and through the RuvAB complex. HJ branch migration allows RuvC to scan DNA until it finds its consensus sequence, where it cleaves and resolves the cruciform DNA. The protein is Holliday junction branch migration complex subunit RuvA of Mycoplasma capricolum subsp. capricolum (strain California kid / ATCC 27343 / NCTC 10154).